The primary structure comprises 90 residues: U7-theraphotoxin-Hhn1a 8 (90 aa).

The first 19 residues, 1 to 19, serve as a signal peptide directing secretion; the sequence is MKTAIFTVVLALAVFAVLS. Positions 20–50 are excised as a propeptide; the sequence is FGWEANEKALSEEFTELIHEKGAASETEARE. 3 cysteine pairs are disulfide-bonded: Cys-51/Cys-65, Cys-58/Cys-70, and Cys-64/Cys-81.

Belongs to the neurotoxin 10 (Hwtx-1) family. 13 (Hntx-13) subfamily. As to expression, expressed by the venom gland.

It is found in the secreted. In terms of biological role, ion channel inhibitor. This chain is U7-theraphotoxin-Hhn1a 8, found in Cyriopagopus hainanus (Chinese bird spider).